Here is a 364-residue protein sequence, read N- to C-terminus: Natterin-3 (364 aa).

The first 18 residues, Met1 to Ala18, serve as a signal peptide directing secretion. Positions Gln19–Ala42 are excised as a propeptide.

Belongs to the natterin family. Contains 4 disulfide bonds. In terms of tissue distribution, expressed by the venom gland.

It localises to the secreted. With respect to regulation, inhibited by tissue-kallikrein inhibitor TKI and trasylol. Plasma kallikrein inhibitor PKSI527 and classical inhibitors of serine-, metallo-, thiol- or aspartate-peptidases evokes a minor inhibition of the peptide digestion. Its function is as follows. Shows nociceptive, edema-inducing and kininogenase activity with release of kallidin from low molecular weight kininogen. The cleavage occurs at Met-Lys bonds. The chain is Natterin-3 from Thalassophryne nattereri (Copper Joe toadfish).